The sequence spans 506 residues: Dipeptide and tripeptide permease A (506 aa).

Residues 1 to 36 (MSTANNNSEHPESVSLNAFKQPKAFYLIFSIELWER) lie on the Cytoplasmic side of the membrane. Residues 37 to 57 (FGYYGLQGIMAVYLVKMLGLS) form a helical membrane-spanning segment. The Periplasmic portion of the chain corresponds to 58–61 (EADS). The helical transmembrane segment at 62 to 82 (ITLFSSFSALVYGFVAIGGWL) threads the bilayer. The Cytoplasmic segment spans residues 83-91 (GDKVLGSKR). 2 helical membrane passes run 92-112 (VIVLGALVLAVGYAMVAYSGH) and 113-133 (EIFWVYLGMATIAVGSGLFKA). Topologically, residues 134-155 (NPSSLLSTCYEKDDPRLDGAFT) are cytoplasmic. Residues 156–176 (MYYMSVNIGSFLSMLATPWLA) traverse the membrane as a helical segment. Residues 177 to 180 (AKYG) are Periplasmic-facing. Residues 181–201 (WSVAFSLSVVGMLITLVNFMV) traverse the membrane as a helical segment. Topologically, residues 202 to 222 (CHKWVKQHGSKPDFKPLQVKK) are cytoplasmic. A helical transmembrane segment spans residues 223–243 (LLMVLVGVVALVALSSWLLHN). Over 244-248 (QIIAR) the chain is Periplasmic. A helical transmembrane segment spans residues 249–269 (WALAIVSIGIVIVFAKETFAL). The Cytoplasmic segment spans residues 270-276 (HGAARRK). Residues 277–297 (MIVAFLLMLEAVVFFVLYSQM) form a helical membrane-spanning segment. At 298–322 (PTSLNFFAIHNVEHNILGLAFEPEQ) the chain is on the periplasmic side. The helical transmembrane segment at 323-343 (YQALNPFWIMLASPILAALYN) threads the bilayer. The Cytoplasmic portion of the chain corresponds to 344 to 354 (KMGDRLPMPHK). A helical transmembrane segment spans residues 355 to 375 (FAFGMILCSGAFLVLPWGASF). The Periplasmic segment spans residues 376 to 385 (ANEQGIVSVN). The helical transmembrane segment at 386–406 (WLILSYALQSIGELMISGLGL) threads the bilayer. The Cytoplasmic segment spans residues 407–416 (AMVAQLVPQR). The chain crosses the membrane as a helical span at residues 417–437 (LMGFIMGSWFLTTAAAALIAG). Residues 438-461 (KVAGLTAVPGDVNDAHASLAIYSH) are Periplasmic-facing. A helical membrane pass occupies residues 462 to 482 (VFMQIGIATAVIAILMMLTAP). Topologically, residues 483–506 (KLHRMTLDTAEDTEKKAQAAAITN) are cytoplasmic.

The protein belongs to the major facilitator superfamily. Proton-dependent oligopeptide transporter (POT/PTR) (TC 2.A.17) family. DtpA subfamily.

The protein resides in the cell inner membrane. Its function is as follows. Proton-dependent permease that transports di- and tripeptides. The chain is Dipeptide and tripeptide permease A from Serratia proteamaculans (strain 568).